Consider the following 110-residue polypeptide: Large ribosomal subunit protein uL22 (110 aa).

The protein belongs to the universal ribosomal protein uL22 family. Part of the 50S ribosomal subunit.

This protein binds specifically to 23S rRNA; its binding is stimulated by other ribosomal proteins, e.g. L4, L17, and L20. It is important during the early stages of 50S assembly. It makes multiple contacts with different domains of the 23S rRNA in the assembled 50S subunit and ribosome. In terms of biological role, the globular domain of the protein is located near the polypeptide exit tunnel on the outside of the subunit, while an extended beta-hairpin is found that lines the wall of the exit tunnel in the center of the 70S ribosome. This Buchnera aphidicola subsp. Schizaphis graminum (strain Sg) protein is Large ribosomal subunit protein uL22.